Here is a 325-residue protein sequence, read N- to C-terminus: uncharacterized protein (325 aa).

2 coiled-coil regions span residues 38–69 (VHVA…QNQS) and 201–229 (ANTD…LEFK).

This is an uncharacterized protein from Acanthamoeba polyphaga (Amoeba).